Consider the following 865-residue polypeptide: AP-1 complex subunit gamma-1 (865 aa).

Residues 665–690 (AEPLETPVDEMTQSPQSSLSRAPSTS) are disordered. Over residues 675–690 (MTQSPQSSLSRAPSTS) the composition is skewed to polar residues. The GAE domain occupies 746 to 860 (KSYPPIVVFD…LDQVDFGKLP (115 aa)).

The protein belongs to the adaptor complexes large subunit family. As to quaternary structure, adaptor protein complex 1 (AP-1) is a heterotetramer composed of two large adaptins (gamma-type subunit apl4 and beta-type subunit apl2), a medium adaptin (mu-type subunit apm1) and a small adaptin (sigma-type subunit aps1). AP-1 interacts with clathrin.

The protein localises to the cytoplasmic vesicle. It is found in the clathrin-coated vesicle membrane. Its subcellular location is the golgi apparatus. Its function is as follows. Adaptins are components of the adaptor complexes which link clathrin to receptors in coated vesicles. Clathrin-associated protein complexes are believed to interact with the cytoplasmic tails of membrane proteins, leading to their selection and concentration. The AP-1 complex interacts directly with clathrin. The polypeptide is AP-1 complex subunit gamma-1 (apl4) (Schizosaccharomyces pombe (strain 972 / ATCC 24843) (Fission yeast)).